Consider the following 227-residue polypeptide: Phosphoribosylformylglycinamidine synthase subunit PurQ (227 aa).

The 223-residue stretch at 3-225 (FAVIVFPGSN…LKQWRETYVV (223 aa)) folds into the Glutamine amidotransferase type-1 domain. The active-site Nucleophile is C86. Catalysis depends on residues H194 and E196.

As to quaternary structure, part of the FGAM synthase complex composed of 1 PurL, 1 PurQ and 2 PurS subunits.

It is found in the cytoplasm. It carries out the reaction N(2)-formyl-N(1)-(5-phospho-beta-D-ribosyl)glycinamide + L-glutamine + ATP + H2O = 2-formamido-N(1)-(5-O-phospho-beta-D-ribosyl)acetamidine + L-glutamate + ADP + phosphate + H(+). The catalysed reaction is L-glutamine + H2O = L-glutamate + NH4(+). It functions in the pathway purine metabolism; IMP biosynthesis via de novo pathway; 5-amino-1-(5-phospho-D-ribosyl)imidazole from N(2)-formyl-N(1)-(5-phospho-D-ribosyl)glycinamide: step 1/2. In terms of biological role, part of the phosphoribosylformylglycinamidine synthase complex involved in the purines biosynthetic pathway. Catalyzes the ATP-dependent conversion of formylglycinamide ribonucleotide (FGAR) and glutamine to yield formylglycinamidine ribonucleotide (FGAM) and glutamate. The FGAM synthase complex is composed of three subunits. PurQ produces an ammonia molecule by converting glutamine to glutamate. PurL transfers the ammonia molecule to FGAR to form FGAM in an ATP-dependent manner. PurS interacts with PurQ and PurL and is thought to assist in the transfer of the ammonia molecule from PurQ to PurL. The sequence is that of Phosphoribosylformylglycinamidine synthase subunit PurQ from Bacillus anthracis (strain A0248).